Here is a 443-residue protein sequence, read N- to C-terminus: Ribosomal protein uS12 methylthiotransferase RimO (443 aa).

Positions 8–118 constitute an MTTase N-terminal domain; the sequence is PKVGFVSLGC…VVNAVHEVVP (111 aa). [4Fe-4S] cluster contacts are provided by C17, C53, C82, C151, C155, and C158. In terms of domain architecture, Radical SAM core spans 137 to 375; sequence LTPRHYAYLK…MAHQQAISAA (239 aa). The TRAM domain occupies 378–443; that stretch reads QQRIGKEIEV…DEYDMWAEPI (66 aa).

It belongs to the methylthiotransferase family. RimO subfamily. Requires [4Fe-4S] cluster as cofactor.

It localises to the cytoplasm. It carries out the reaction L-aspartate(89)-[ribosomal protein uS12]-hydrogen + (sulfur carrier)-SH + AH2 + 2 S-adenosyl-L-methionine = 3-methylsulfanyl-L-aspartate(89)-[ribosomal protein uS12]-hydrogen + (sulfur carrier)-H + 5'-deoxyadenosine + L-methionine + A + S-adenosyl-L-homocysteine + 2 H(+). Its function is as follows. Catalyzes the methylthiolation of an aspartic acid residue of ribosomal protein uS12. In Pseudomonas entomophila (strain L48), this protein is Ribosomal protein uS12 methylthiotransferase RimO.